Reading from the N-terminus, the 366-residue chain is Cobalt-precorrin-5B C(1)-methyltransferase (366 aa).

The protein belongs to the CbiD family.

The catalysed reaction is Co-precorrin-5B + S-adenosyl-L-methionine = Co-precorrin-6A + S-adenosyl-L-homocysteine. It functions in the pathway cofactor biosynthesis; adenosylcobalamin biosynthesis; cob(II)yrinate a,c-diamide from sirohydrochlorin (anaerobic route): step 6/10. Functionally, catalyzes the methylation of C-1 in cobalt-precorrin-5B to form cobalt-precorrin-6A. This is Cobalt-precorrin-5B C(1)-methyltransferase from Thermus thermophilus (strain ATCC BAA-163 / DSM 7039 / HB27).